Here is a 523-residue protein sequence, read N- to C-terminus: REST corepressor 2 (523 aa).

A disordered region spans residues 1–43 (MPSVMEKPSAGSGILSRSRAKTAPNGGQPHSEDDSSEEEHSHD). Basic and acidic residues predominate over residues 30 to 43 (HSEDDSSEEEHSHD). Ser-31, Ser-35, Ser-36, and Ser-63 each carry phosphoserine. An ELM2 domain is found at 44 to 129 (SMIRVGTNYQ…KSLADLANFT (86 aa)). Lys-88 is covalently cross-linked (Glycyl lysine isopeptide (Lys-Gly) (interchain with G-Cter in SUMO2)). Residues 130–181 (PFPDEWTVEDKVLFEQAFGFHGKCFQRIQQMLPDKLIPSLVKYYYSWKKTRS) enclose the SANT 1 domain. Residues 185-265 (VMDRQARRLG…RRRPPKGMYL (81 aa)) are disordered. Ser-202 carries the post-translational modification Phosphoserine. Residues 248-260 (YRHHPLRTRRRPP) show a composition bias toward basic residues. A coiled-coil region spans residues 283-314 (TLRGLDSQLISLKRQVQSMKQTNSSLRQALEG). Residues 327-378 (KFNSRWTTDEQLLAVQAIRRYGKDFGAIAEVIGNKTLTQVKTFFVSYRRRFN) enclose the SANT 2 domain. The disordered stretch occupies residues 387–523 (EAEQDGAPTA…AQLEPPAPSL (137 aa)). A compositionally biased stretch (pro residues) spans 432–459 (SVPPAPPPPPPPTSLSQPPPLLRPPLPT). Residues 460–482 (APTLLRQPPPLQQGRFLQPRLAP) show a composition bias toward low complexity. Position 479 is an asymmetric dimethylarginine (Arg-479).

Belongs to the CoREST family.

It is found in the nucleus. Functionally, may act as a component of a corepressor complex that represses transcription. This chain is REST corepressor 2 (Rcor2), found in Rattus norvegicus (Rat).